The chain runs to 147 residues: Large ribosomal subunit protein uL15 (147 aa).

The disordered stretch occupies residues M1 to V46. Residues K16 to G28 show a composition bias toward basic residues.

The protein belongs to the universal ribosomal protein uL15 family. As to quaternary structure, part of the 50S ribosomal subunit.

In terms of biological role, binds to the 23S rRNA. In Mesomycoplasma hyopneumoniae (strain 232) (Mycoplasma hyopneumoniae), this protein is Large ribosomal subunit protein uL15.